Here is a 280-residue protein sequence, read N- to C-terminus: Pantothenate synthetase (280 aa).

30–37 (MGALHEGH) contacts ATP. The active-site Proton donor is the H37. Q61 is a (R)-pantoate binding site. Q61 contributes to the beta-alanine binding site. 147–150 (GQKD) contributes to the ATP binding site. Q153 contacts (R)-pantoate. Residues V176 and 184-187 (MSSR) each bind ATP.

It belongs to the pantothenate synthetase family. Homodimer.

The protein resides in the cytoplasm. The catalysed reaction is (R)-pantoate + beta-alanine + ATP = (R)-pantothenate + AMP + diphosphate + H(+). Its pathway is cofactor biosynthesis; (R)-pantothenate biosynthesis; (R)-pantothenate from (R)-pantoate and beta-alanine: step 1/1. Catalyzes the condensation of pantoate with beta-alanine in an ATP-dependent reaction via a pantoyl-adenylate intermediate. This chain is Pantothenate synthetase, found in Thermodesulfovibrio yellowstonii (strain ATCC 51303 / DSM 11347 / YP87).